The following is a 251-amino-acid chain: UPF0309 protein GK1441 (251 aa).

The region spanning 31–214 (VSEAIQNGGI…VLMAENGIEP (184 aa)) is the SIS domain.

The protein belongs to the UPF0309 family.

The chain is UPF0309 protein GK1441 from Geobacillus kaustophilus (strain HTA426).